The sequence spans 616 residues: FAD-linked oxidoreductase cheF (616 aa).

The FAD-binding PCMH-type domain maps to 160-344 (NQGLVSPWYV…LSMTVRVEPA (185 aa)).

It belongs to the oxygen-dependent FAD-linked oxidoreductase family. It depends on FAD as a cofactor.

It participates in secondary metabolite biosynthesis. Its function is as follows. FAD-linked oxidoreductase; part of the gene cluster that mediates the biosynthesis of chaetoglobosin A which has a unique inhibitory activity against actin polymerization in mammalian cells. Chaetoglobosin A and its intermediates are involved in the morphological differentiation of C.globosum. The first step of the pathway is the synthesis of prochaetoglobosin I via condensation of one acetyl-CoA, 8 malonyl-CoA, and a L-tryptophan molecule by the PKS-NRPS hybrid synthetase cheA, followed by reduction of backbone double bond to install desired geometry by the enoyl reductase cheB. Further multiple oxidation steps performed by the cytochrome P450 monooxygenases cheE and cheG, as well as by the FAD-linked oxidoreductase cheF, lead to the formation of chaetoglobosin A. Depending on the order of action of these reductases, distinct intermediates can be identified. Within the pathway, the cytochrome P450 monooxygenase cheE catalyzes a stereospecific epoxidation on prochaetoglobosin I, cytoglobosin D, and chaetoglobosin J intermediates. The FAD-linked oxidoreductase cheF performs dehydrogenation of the C-20 hydroxyl groups in the 20-dihyrochaetoglobosin A and cytoglobosin D intermediates. Finally, the cytochrome P450 monooxygenase cheG can catalyze the stereospecific dihydroxylation of prochaetoglobosin I and prochaetoglobosin IV at C-19 and C-20, respectively. The Diels-Alderase cheD may play a role in the post-PKS-NRPS biosynthetic steps catalyzing Diels-Alder cyclization. The sequence is that of FAD-linked oxidoreductase cheF from Chaetomium globosum (strain ATCC 6205 / CBS 148.51 / DSM 1962 / NBRC 6347 / NRRL 1970) (Soil fungus).